Consider the following 897-residue polypeptide: 3'-5' exonuclease DinG (897 aa).

Positions 8 to 161 constitute an Exonuclease domain; that stretch reads VVDLETTGNQ…DEDAATTAKL (154 aa). One can recognise a Helicase ATP-binding domain in the interval 241–496; sequence SKAVDQLGLT…KAIDQLEKQR (256 aa). Residue 276–283 participates in ATP binding; the sequence is ASLGSGKS. The DEAH box motif lies at 448–451; the sequence is DEAH. The Helicase C-terminal domain maps to 703 to 883; sequence NIDEYVASIV…NYRQKKGDIQ (181 aa).

This sequence belongs to the helicase family. DinG subfamily. Type 2 sub-subfamily.

3'-5' exonuclease. The polypeptide is 3'-5' exonuclease DinG (Staphylococcus aureus (strain bovine RF122 / ET3-1)).